Here is a 427-residue protein sequence, read N- to C-terminus: MDRETRTFAERYYRDLRDPVPSGGGGPTPSGVTFIQTPNAFSYADFVKGFLLPNLPCVFSSAFTEGWGSRRRWVTSEGKPDFEYLQQKYGDAVVPVANCGVREYNSNPKEHMSFRDYISYWKDYIQGSYSSSRGCLYLKDWHLCRDSLVNDLEDIFTLPVYFSSDWLNEFWDVLNVDDYRFVYAGPRGTWSPFHADIFRSFSWSVNICGKKKWLFFPPGEEEALRDCHGNLPYDVTSTELLDTHLYPKIQHHSLPIEVIQEPGEMVFVPSGWHHQVYNLDDTISINHNWVNGCNLPNMWHFLQQELQAVQHEVEEWKDSMPDWHHHCQVIMKSCTGINFEEFYHFLKVIAEKRLLVLEQGLKGDSGDSRSLDLGLQQAAFDIGRLADVLASVVVNPDFQRVDTSAFSPQPEELLQQLEDAVAAAEAL.

The JmjC domain occupies 147 to 306; it reads SLVNDLEDIF…NMWHFLQQEL (160 aa). Fe cation contacts are provided by H194, D196, and H274.

Belongs to the JMJD6 family. As to quaternary structure, interacts with ETF1. Interacts with the ETF1-GSPT1 complex. Requires Fe(2+) as cofactor.

It localises to the cytoplasm. It carries out the reaction L-lysyl-[protein] + 2-oxoglutarate + O2 = 4-hydroxy-L-lysyl-[protein] + succinate + CO2. Its function is as follows. Catalyzes the 2-oxoglutarate and iron-dependent C4-lysyl hydroxylation of ETF1 at 'Lys-63' thereby promoting the translational termination efficiency of ETF1. Not essential for embryonic stem cell (ESC) maintenance and the embryonic and postnatal development. The chain is 2-oxoglutarate and iron-dependent oxygenase JMJD4 (Jmjd4) from Mus musculus (Mouse).